Consider the following 794-residue polypeptide: Mitochondrial intermediate peptidase (794 aa).

Residues 1-39 (MRVTSSRLLQGGSLVSRVLKRRLNNASRTKKGWFSTRTL) constitute a mitochondrion transit peptide. His-581 contributes to the Zn(2+) binding site. The active site involves Glu-582. Positions 585 and 588 each coordinate Zn(2+).

This sequence belongs to the peptidase M3 family. It depends on Zn(2+) as a cofactor.

The protein localises to the mitochondrion matrix. The enzyme catalyses Release of an N-terminal octapeptide as second stage of processing of some proteins imported into the mitochondrion.. In terms of biological role, cleaves proteins, imported into the mitochondrion, to their mature size. While most mitochondrial precursor proteins are processed to the mature form in one step by mitochondrial processing peptidase (MPP), the sequential cleavage by MIP of an octapeptide after initial processing by MPP is a required step for a subgroup of nuclear-encoded precursor proteins destined for the matrix or the inner membrane. This is Mitochondrial intermediate peptidase (OCT1) from Debaryomyces hansenii (strain ATCC 36239 / CBS 767 / BCRC 21394 / JCM 1990 / NBRC 0083 / IGC 2968) (Yeast).